An 894-amino-acid chain; its full sequence is MSRRKQGNPQHLSQRELITPEADHVEAAILEEDEGLEIEEPSGLGLMVGGPDPDLLTCGQCQMNFPLGDILVFIEHKRKQCGGSLGACYDKALDKDSPPPSSRSELRKVSEPVEIGIQVTPDEDDHLLSPTKGICPKQENIAGPCRPAQLPAVAPIAASSHPHSSVITSPLRALGALPPCLPLPCCSARPVSGDGTQGEGQTEAPFGCQCQLSGKDEPSSYICTTCKQPFNSAWFLLQHAQNTHGFRIYLEPGPASSSLTPRLTIPPPLGPEAVAQSPLMNFLGDSNPFNLLRMTGPILRDHPGFGEGRLPGTPPLFSPPPRHHLDPHRLSAEEMGLVAQHPSAFDRVMRLNPMAIDSPAMDFSRRLRELAGNSSTPPPVSPGRGNPMHRLLNPFQPSPKSPFLSTPPLPPMPPGGTPPPQPPAKSKSCEFCGKTFKFQSNLIVHRRSHTGEKPYKCQLCDHACSQASKLKRHMKTHMHKAGSLAGRSDDGLSAASSPEPGTSELAGEGLKAADGDFRHHESDPSLGHEPEEEDEEEEEEEEELLLENESRPESSFSMDSELSRNRENGGGGVPGVPGAGGGAAKALADEKALVLGKVMENVGLGALPQYGELLADKQKRGAFLKRAAGGGDAGDDDDAGGCGDAGAGGAVNGRGGGFAPGTEPFPGLFPRKPAPLPSPGLNSAAKRIKVEKDLELPPAALIPSENVYSQWLVGYAASRHFMKDPFLGFTDARQSPFATSSEHSSENGSLRFSTPPGDLLDGGLSGRSGTASGGSTPHLGGPGPGRPSSKEGRRSDTCEYCGKVFKNCSNLTVHRRSHTGERPYKCELCNYACAQSSKLTRHMKTHGQIGKEVYRCDICQMPFSVYSTLEKHMKKWHGEHLLTNDVKIEQAERS.

Ser-97 and Ser-110 each carry phosphoserine. A Phosphothreonine modification is found at Thr-120. Ser-129 is subject to Phosphoserine. Lys-137 is covalently cross-linked (Glycyl lysine isopeptide (Lys-Gly) (interchain with G-Cter in SUMO2)). The segment at 221 to 251 adopts a C2H2-type 1 zinc-finger fold; the sequence is YICTTCKQPFNSAWFLLQHAQNTHGFRIYLE. At Ser-256 the chain carries Phosphoserine. Thr-260 is subject to Phosphothreonine. Ser-277 bears the Phosphoserine mark. Arg-293 bears the Omega-N-methylarginine mark. Residue Arg-322 is modified to Asymmetric dimethylarginine. Ser-358 is subject to Phosphoserine. Disordered stretches follow at residues 370 to 428 and 471 to 583; these read LAGN…KSKS and KRHM…GGGA. Position 376 is a phosphothreonine (Thr-376). 3 positions are modified to phosphoserine: Ser-381, Ser-398, and Ser-401. Positions 396 to 423 are enriched in pro residues; sequence QPSPKSPFLSTPPLPPMPPGGTPPPQPP. A phosphothreonine mark is found at Thr-406 and Thr-417. 2 consecutive C2H2-type zinc fingers follow at residues 427–454 and 455–482; these read KSCEFCGKTFKFQSNLIVHRRSHTGEKP and YKCQLCDHACSQASKLKRHMKTHMHKAG. Residues 471-480 show a composition bias toward basic residues; sequence KRHMKTHMHK. Ser-483, Ser-488, Ser-496, and Ser-497 each carry phosphoserine. Basic and acidic residues predominate over residues 511-529; that stretch reads KAADGDFRHHESDPSLGHE. Over residues 530-546 the composition is skewed to acidic residues; the sequence is PEEEDEEEEEEEEELLL. A compositionally biased stretch (gly residues) spans 568–583; sequence NGGGGVPGVPGAGGGA. Residues Lys-591 and Lys-617 each participate in a glycyl lysine isopeptide (Lys-Gly) (interchain with G-Cter in SUMO2) cross-link. Residues 653–680 are disordered; that stretch reads GRGGGFAPGTEPFPGLFPRKPAPLPSPG. Ser-678 bears the Phosphoserine mark. Glycyl lysine isopeptide (Lys-Gly) (interchain with G-Cter in SUMO2) cross-links involve residues Lys-686 and Lys-723. The segment covering 737–752 has biased composition (polar residues); it reads FATSSEHSSENGSLRF. The tract at residues 737 to 794 is disordered; that stretch reads FATSSEHSSENGSLRFSTPPGDLLDGGLSGRSGTASGGSTPHLGGPGPGRPSSKEGRR. Low complexity predominate over residues 753–775; sequence STPPGDLLDGGLSGRSGTASGGS. The residue at position 754 (Thr-754) is a Phosphothreonine. 2 positions are modified to phosphoserine: Ser-765 and Ser-772. C2H2-type zinc fingers lie at residues 796-823, 824-853, and 854-884; these read DTCEYCGKVFKNCSNLTVHRRSHTGERP, YKCELCNYACAQSSKLTRHMKTHGQIGKEV, and YRCDICQMPFSVYSTLEKHMKKWHGEHLLTN. N6-acetyllysine is present on Lys-851. Lys-887 is covalently cross-linked (Glycyl lysine isopeptide (Lys-Gly) (interchain with G-Cter in SUMO2)).

In terms of assembly, interacts with TFCOUP1, SIRT1, ARP1 and EAR2. Interacts with EP300; the interaction is detected in activated T-lymphocytes, but not under resting conditions. In terms of processing, sumoylated with SUMO1. In terms of tissue distribution, highly expressed in brain and in malignant T-cell lines derived from patients with adult T-cell leukemia/lymphoma.

It is found in the nucleus. Key regulator of both differentiation and survival of T-lymphocytes during thymocyte development in mammals. Essential in controlling the responsiveness of hematopoietic stem cells to chemotactic signals by modulating the expression of the receptors CCR7 and CCR9, which direct the movement of progenitor cells from the bone marrow to the thymus. Is a regulator of IL2 promoter and enhances IL2 expression in activated CD4(+) T-lymphocytes. Tumor-suppressor that represses transcription through direct, TFCOUP2-independent binding to a GC-rich response element. May also function in the P53-signaling pathway. The sequence is that of B-cell lymphoma/leukemia 11B (BCL11B) from Homo sapiens (Human).